The sequence spans 194 residues: ATP-dependent Clp protease proteolytic subunit (194 aa).

Ser-98 functions as the Nucleophile in the catalytic mechanism. Residue His-123 is part of the active site.

This sequence belongs to the peptidase S14 family. Fourteen ClpP subunits assemble into 2 heptameric rings which stack back to back to give a disk-like structure with a central cavity, resembling the structure of eukaryotic proteasomes.

It is found in the cytoplasm. It carries out the reaction Hydrolysis of proteins to small peptides in the presence of ATP and magnesium. alpha-casein is the usual test substrate. In the absence of ATP, only oligopeptides shorter than five residues are hydrolyzed (such as succinyl-Leu-Tyr-|-NHMec, and Leu-Tyr-Leu-|-Tyr-Trp, in which cleavage of the -Tyr-|-Leu- and -Tyr-|-Trp bonds also occurs).. In terms of biological role, cleaves peptides in various proteins in a process that requires ATP hydrolysis. Has a chymotrypsin-like activity. Plays a major role in the degradation of misfolded proteins. The chain is ATP-dependent Clp protease proteolytic subunit from Sodalis glossinidius (strain morsitans).